The following is a 367-amino-acid chain: Peptide chain release factor 1 (367 aa).

Gln-243 is subject to N5-methylglutamine.

The protein belongs to the prokaryotic/mitochondrial release factor family. Post-translationally, methylated by PrmC. Methylation increases the termination efficiency of RF1.

It is found in the cytoplasm. Functionally, peptide chain release factor 1 directs the termination of translation in response to the peptide chain termination codons UAG and UAA. The sequence is that of Peptide chain release factor 1 from Acidovorax sp. (strain JS42).